We begin with the raw amino-acid sequence, 355 residues long: DNA polymerase IV (355 aa).

In terms of domain architecture, UmuC spans I4–G185. Mg(2+) contacts are provided by D8 and D103. E104 is an active-site residue.

Belongs to the DNA polymerase type-Y family. Monomer. Requires Mg(2+) as cofactor.

It is found in the cytoplasm. The enzyme catalyses DNA(n) + a 2'-deoxyribonucleoside 5'-triphosphate = DNA(n+1) + diphosphate. Poorly processive, error-prone DNA polymerase involved in untargeted mutagenesis. Copies undamaged DNA at stalled replication forks, which arise in vivo from mismatched or misaligned primer ends. These misaligned primers can be extended by PolIV. Exhibits no 3'-5' exonuclease (proofreading) activity. May be involved in translesional synthesis, in conjunction with the beta clamp from PolIII. The protein is DNA polymerase IV of Pasteurella multocida (strain Pm70).